Here is a 534-residue protein sequence, read N- to C-terminus: Prolyl 4-hydroxylase subunit alpha-1 (534 aa).

A signal peptide spans 1-17 (MIWGVLMMGILLPQCSA). N-linked (GlcNAc...) asparagine glycosylation is present at Asn-113. A TPR repeat occupies 205–238 (VSVLDYLSYAVYQQGDLDKALLLTKKLLELDPEH). A glycan (N-linked (GlcNAc...) asparagine) is linked at Asn-259. Residues 411 to 519 (TAEELQVANY…KWVSNKWLHE (109 aa)) enclose the Fe2OG dioxygenase domain. The Fe cation site is built by His-429, Asp-431, and His-500. Lys-510 contributes to the 2-oxoglutarate binding site.

It belongs to the P4HA family. As to quaternary structure, heterotetramer of two alpha-1 chains and two beta chains (P4HB)(the beta chain is the multi-functional PDI), where P4HB plays the role of a structural subunit; this tetramer catalyzes the formation of 4-hydroxyproline in collagen. Requires Fe(2+) as cofactor. L-ascorbate is required as a cofactor.

The protein localises to the endoplasmic reticulum lumen. The enzyme catalyses L-prolyl-[collagen] + 2-oxoglutarate + O2 = trans-4-hydroxy-L-prolyl-[collagen] + succinate + CO2. Catalyzes the post-translational formation of 4-hydroxyproline in -Xaa-Pro-Gly- sequences in collagens and other proteins. The polypeptide is Prolyl 4-hydroxylase subunit alpha-1 (P4ha1) (Rattus norvegicus (Rat)).